The primary structure comprises 146 residues: D-aminoacyl-tRNA deacylase (146 aa).

Residues 137 to 138 (GP) carry the Gly-cisPro motif, important for rejection of L-amino acids motif.

This sequence belongs to the DTD family. In terms of assembly, homodimer.

The protein resides in the cytoplasm. It carries out the reaction glycyl-tRNA(Ala) + H2O = tRNA(Ala) + glycine + H(+). It catalyses the reaction a D-aminoacyl-tRNA + H2O = a tRNA + a D-alpha-amino acid + H(+). Its function is as follows. An aminoacyl-tRNA editing enzyme that deacylates mischarged D-aminoacyl-tRNAs. Also deacylates mischarged glycyl-tRNA(Ala), protecting cells against glycine mischarging by AlaRS. Acts via tRNA-based rather than protein-based catalysis; rejects L-amino acids rather than detecting D-amino acids in the active site. By recycling D-aminoacyl-tRNA to D-amino acids and free tRNA molecules, this enzyme counteracts the toxicity associated with the formation of D-aminoacyl-tRNA entities in vivo and helps enforce protein L-homochirality. The chain is D-aminoacyl-tRNA deacylase from Deinococcus deserti (strain DSM 17065 / CIP 109153 / LMG 22923 / VCD115).